Reading from the N-terminus, the 216-residue chain is Small ribosomal subunit protein uS5 (216 aa).

A disordered region spans residues 1–55 (MDRKLENQKDLLNQDPKVELNSQSVAKNPLNSREVKPIQRRRPLRKNSRDKNSKP). Residues 20 to 31 (LNSQSVAKNPLN) are compositionally biased toward polar residues. The S5 DRBM domain maps to 57-120 (FEERVIAIHR…KDAQNRLVSV (64 aa)).

Belongs to the universal ribosomal protein uS5 family. As to quaternary structure, part of the 30S ribosomal subunit. Contacts proteins S4 and S8.

Functionally, with S4 and S12 plays an important role in translational accuracy. In terms of biological role, located at the back of the 30S subunit body where it stabilizes the conformation of the head with respect to the body. This chain is Small ribosomal subunit protein uS5, found in Mesomycoplasma hyopneumoniae (strain J / ATCC 25934 / NCTC 10110) (Mycoplasma hyopneumoniae).